Here is an 879-residue protein sequence, read N- to C-terminus: DNA methyltransferase A (879 aa).

It belongs to the methyltransferase superfamily.

It carries out the reaction a 2'-deoxyadenosine in DNA + S-adenosyl-L-methionine = an N(6)-methyl-2'-deoxyadenosine in DNA + S-adenosyl-L-homocysteine + H(+). Recognizes the double-stranded sequence 5'-GACGAG-3' and methylates A-5, yielding m6A. m6A methylation functions as a transcriptional modifier, promoting transcription of a number of genes (at least scpA, hbs, rnhC, yumC and zapA). One studied mechanism is via transcriptional repressor ScoC (also called hpr) which binds to non-methylated scpA promoter; when the m6A target is methylated ScoC no longer binds and scpA transcription is up-regulated. Other mechanisms for gene expression regulation probably exist. Binds DNA with and without the target sequence. Although it resembles a restriction-modification system, it does not have detectable endonuclease activity under tested conditions. A gamma subtype methylase. The sequence is that of DNA methyltransferase A from Bacillus subtilis (strain 168).